The chain runs to 513 residues: Activin receptor type-2A (513 aa).

Residues 1-19 (MGAAAKLAFAVFLISCSSG) form the signal peptide. At 20-135 (AILGRSETQE…TSNPVTPKPP (116 aa)) the chain is on the extracellular side. Intrachain disulfides connect Cys-30/Cys-60, Cys-50/Cys-78, Cys-85/Cys-104, Cys-91/Cys-103, and Cys-105/Cys-110. 2 N-linked (GlcNAc...) asparagine glycosylation sites follow: Asn-43 and Asn-66. A helical membrane pass occupies residues 136–161 (YYNILLYSLVPLMLIAGIVICAFWVY). Over 162–513 (RHHKMAYPPV…VDFPPKESSL (352 aa)) the chain is Cytoplasmic. Positions 192–485 (LQLLEVKARG…GERITQMQRL (294 aa)) constitute a Protein kinase domain. ATP contacts are provided by residues 198 to 206 (KARGRFGCV) and Lys-219. Asp-322 serves as the catalytic Proton acceptor.

The protein belongs to the protein kinase superfamily. TKL Ser/Thr protein kinase family. TGFB receptor subfamily. Part of a complex consisting of MAGI2/ARIP1, ACVR2A, ACVR1B and SMAD3. Interacts with MAGI2/ARIP1. Interacts with type I receptor ACVR1. Interacts with BMP7. Interacts with TSC22D1/TSC-22. Interacts with activin A/INHBA. Requires Mg(2+) as cofactor. Mn(2+) is required as a cofactor.

The protein resides in the cell membrane. The catalysed reaction is L-threonyl-[receptor-protein] + ATP = O-phospho-L-threonyl-[receptor-protein] + ADP + H(+). The enzyme catalyses L-seryl-[receptor-protein] + ATP = O-phospho-L-seryl-[receptor-protein] + ADP + H(+). In terms of biological role, on ligand binding, forms a receptor complex consisting of two type II and two type I transmembrane serine/threonine kinases. Type II receptors phosphorylate and activate type I receptors which autophosphorylate, then bind and activate SMAD transcriptional regulators. Receptor for activin A, activin B and inhibin A. Mediates induction of adipogenesis by GDF6. The protein is Activin receptor type-2A of Homo sapiens (Human).